Here is a 185-residue protein sequence, read N- to C-terminus: Protein GrpE (185 aa).

Residues 1–40 (MSEEKKDEILEQETVETKEEIKTEEAEQKTESLEEKVARL) form a disordered region.

Belongs to the GrpE family. Homodimer.

It localises to the cytoplasm. Participates actively in the response to hyperosmotic and heat shock by preventing the aggregation of stress-denatured proteins, in association with DnaK and GrpE. It is the nucleotide exchange factor for DnaK and may function as a thermosensor. Unfolded proteins bind initially to DnaJ; upon interaction with the DnaJ-bound protein, DnaK hydrolyzes its bound ATP, resulting in the formation of a stable complex. GrpE releases ADP from DnaK; ATP binding to DnaK triggers the release of the substrate protein, thus completing the reaction cycle. Several rounds of ATP-dependent interactions between DnaJ, DnaK and GrpE are required for fully efficient folding. The protein is Protein GrpE of Aliarcobacter butzleri (strain RM4018) (Arcobacter butzleri).